A 396-amino-acid polypeptide reads, in one-letter code: Putative 3-phosphoinositide-dependent protein kinase 2 (396 aa).

The span at 1 to 11 shows a compositional bias: polar residues; that stretch reads MVRTQTESSTP. A disordered region spans residues 1 to 53; sequence MVRTQTESSTPPGIPGGSRQGPAMDGTAAEPRPGAGSLQHAQPPPQPRKKRPE. Positions 55–315 constitute a Protein kinase domain; sequence FKFGKILGEG…YGPLKAHPFF (261 aa). ATP contacts are provided by residues 65–67 and Lys84; that span reads SFS. Residues 86 to 130 are PIF-pocket; sequence LEKRHIIKENKVPYVTRERDVMSRLDHPFFVKLYFTFQDDEKLYF. Residues 133–135 and Glu139 each bind ATP; that span reads SYA. Asp178 acts as the Proton acceptor in catalysis. 2 residues coordinate ATP: Glu182 and Asp196.

Belongs to the protein kinase superfamily. AGC Ser/Thr protein kinase family. PDPK1 subfamily. Phosphorylated on tyrosine and serine/threonine.

It is found in the cytoplasm. The protein resides in the membrane. It catalyses the reaction L-seryl-[protein] + ATP = O-phospho-L-seryl-[protein] + ADP + H(+). It carries out the reaction L-threonyl-[protein] + ATP = O-phospho-L-threonyl-[protein] + ADP + H(+). Its function is as follows. Phosphorylates and activates not only PKB/AKT, but also PKA, PKC-zeta, RPS6KA1 and RPS6KB1. May play a general role in signaling processes and in development. The sequence is that of Putative 3-phosphoinositide-dependent protein kinase 2 from Homo sapiens (Human).